We begin with the raw amino-acid sequence, 194 residues long: MIGRLRGVLTSKTPPWLVVDVCGVGYELEVPMSTFYELPNVGYEVNLFTHYTQKDDSAALYGFLSESERRLFRHLQRVSGIGTKIALAVLSSVSVDTFAGLIQAGDVNALTVIPGIGKKTAERMLVELRDRAADFNNGISTSGKLNLDTVSEAALALQQLGYKPAEAARMARDAGTESDDVASVIKKALQAALR.

Residues 1–64 form a domain I region; it reads MIGRLRGVLT…DDSAALYGFL (64 aa). The segment at 65–140 is domain II; the sequence is SESERRLFRH…RAADFNNGIS (76 aa). The flexible linker stretch occupies residues 140-144; the sequence is STSGK. The interval 145–194 is domain III; it reads LNLDTVSEAALALQQLGYKPAEAARMARDAGTESDDVASVIKKALQAALR.

The protein belongs to the RuvA family. Homotetramer. Forms an RuvA(8)-RuvB(12)-Holliday junction (HJ) complex. HJ DNA is sandwiched between 2 RuvA tetramers; dsDNA enters through RuvA and exits via RuvB. An RuvB hexamer assembles on each DNA strand where it exits the tetramer. Each RuvB hexamer is contacted by two RuvA subunits (via domain III) on 2 adjacent RuvB subunits; this complex drives branch migration. In the full resolvosome a probable DNA-RuvA(4)-RuvB(12)-RuvC(2) complex forms which resolves the HJ.

It is found in the cytoplasm. In terms of biological role, the RuvA-RuvB-RuvC complex processes Holliday junction (HJ) DNA during genetic recombination and DNA repair, while the RuvA-RuvB complex plays an important role in the rescue of blocked DNA replication forks via replication fork reversal (RFR). RuvA specifically binds to HJ cruciform DNA, conferring on it an open structure. The RuvB hexamer acts as an ATP-dependent pump, pulling dsDNA into and through the RuvAB complex. HJ branch migration allows RuvC to scan DNA until it finds its consensus sequence, where it cleaves and resolves the cruciform DNA. This Xylella fastidiosa (strain 9a5c) protein is Holliday junction branch migration complex subunit RuvA.